A 235-amino-acid polypeptide reads, in one-letter code: MRPSGRNNDQLRNLKVTHNFTKHAEGSVLIEFGDTKVICTASVVAGVPKFKKDSGEGWLTAEYGMLPRSTHTRMDREAARGKQSGRTQEIQRLIGRALRASVDLTAIGENTIKVDCDVIQADGGTRTASITGASLAIADAIEYMKQNGMLDEQANPLLSQVAAISVGIYNNEPVLDLDYDEDSNAETDMNVVMNSNGGIIEIQGTAEGKDFSEEEFAKMLGLAKKGIKEIFATVF.

Phosphate-binding positions include arginine 86 and 124–126; that span reads GTR.

Belongs to the RNase PH family. In terms of assembly, homohexameric ring arranged as a trimer of dimers.

It carries out the reaction tRNA(n+1) + phosphate = tRNA(n) + a ribonucleoside 5'-diphosphate. Its function is as follows. Phosphorolytic 3'-5' exoribonuclease that plays an important role in tRNA 3'-end maturation. Removes nucleotide residues following the 3'-CCA terminus of tRNAs; can also add nucleotides to the ends of RNA molecules by using nucleoside diphosphates as substrates, but this may not be physiologically important. Probably plays a role in initiation of 16S rRNA degradation (leading to ribosome degradation) during starvation. The sequence is that of Ribonuclease PH from Francisella tularensis subsp. tularensis (strain FSC 198).